The sequence spans 403 residues: Phosphopentomutase (403 aa).

Mn(2+) contacts are provided by Asp13, Asp298, His303, Asp339, His340, and His351.

Belongs to the phosphopentomutase family. The cofactor is Mn(2+).

It localises to the cytoplasm. It catalyses the reaction 2-deoxy-alpha-D-ribose 1-phosphate = 2-deoxy-D-ribose 5-phosphate. It carries out the reaction alpha-D-ribose 1-phosphate = D-ribose 5-phosphate. The protein operates within carbohydrate degradation; 2-deoxy-D-ribose 1-phosphate degradation; D-glyceraldehyde 3-phosphate and acetaldehyde from 2-deoxy-alpha-D-ribose 1-phosphate: step 1/2. Functionally, isomerase that catalyzes the conversion of deoxy-ribose 1-phosphate (dRib-1-P) and ribose 1-phosphate (Rib-1-P) to deoxy-ribose 5-phosphate (dRib-5-P) and ribose 5-phosphate (Rib-5-P), respectively. This is Phosphopentomutase from Streptococcus mutans serotype c (strain ATCC 700610 / UA159).